The following is a 1377-amino-acid chain: Hemoglobin-binding protease hbp autotransporter (1377 aa).

The first 52 residues, 1–52 (MNRIYSLRYSAVARGFIAVSEFARKCVHKSVRRLCFPVLLLIPVLFSAGSLA), serve as a signal peptide directing secretion. The 250-residue stretch at 53–302 (GTVNNELGYQ…AVIPLDFIGQ (250 aa)) folds into the Peptidase S6 domain. Active-site charge relay system residues include His-125, Asp-153, and Ser-259. Residues 1111–1377 (DINGEAGTWV…AINANIRYSF (267 aa)) form the Autotransporter domain.

Post-translationally, cleaved to release the mature protein from the outer membrane.

The protein localises to the periplasm. It is found in the secreted. Its subcellular location is the cell surface. The protein resides in the cell outer membrane. With respect to regulation, protease activity is inhibited by 3,4-dichloroisocoumarin. Functionally, interacts with hemoglobin, degrades it and subsequently binds the released heme. Could make heme accessible not only for E.coli, but also for B.fragilis during mixed intra-abdominal infections. Has a role in abscess formation. The chain is Hemoglobin-binding protease hbp autotransporter (hbp) from Escherichia coli.